The sequence spans 534 residues: Zinc finger protein 671 (534 aa).

One can recognise a KRAB domain in the interval 49-120 (VVFEDVFVYF…DQVDMTSATE (72 aa)). The C2H2-type 1; degenerate zinc-finger motif lies at 192 to 214 (YLCGACGKQFWFSTDFDQHQNQP). 9 C2H2-type zinc fingers span residues 285-307 (HRCG…QRIH), 313-335 (YECN…QTVH), 341-363 (YECS…RRVH), 369-391 (YQCG…QEVH), 397-419 (YVCS…QRTH), 425-447 (YECS…WRIH), 451-473 (YECS…QKVH), 479-501 (YECS…WKVH), and 507-529 (YVCS…QRVH).

Belongs to the krueppel C2H2-type zinc-finger protein family.

The protein localises to the nucleus. Functionally, may be involved in transcriptional regulation. The polypeptide is Zinc finger protein 671 (ZNF671) (Homo sapiens (Human)).